The chain runs to 188 residues: Elongation factor P (188 aa).

The protein belongs to the elongation factor P family.

Its subcellular location is the cytoplasm. The protein operates within protein biosynthesis; polypeptide chain elongation. Its function is as follows. Involved in peptide bond synthesis. Stimulates efficient translation and peptide-bond synthesis on native or reconstituted 70S ribosomes in vitro. Probably functions indirectly by altering the affinity of the ribosome for aminoacyl-tRNA, thus increasing their reactivity as acceptors for peptidyl transferase. The polypeptide is Elongation factor P (Ureaplasma urealyticum serovar 10 (strain ATCC 33699 / Western)).